The following is a 277-amino-acid chain: Sarcosine/dimethylglycine N-methyltransferase (277 aa).

The protein belongs to the methyltransferase superfamily. In terms of assembly, monomer.

The enzyme catalyses sarcosine + 2 S-adenosyl-L-methionine = glycine betaine + 2 S-adenosyl-L-homocysteine + 2 H(+). It carries out the reaction sarcosine + S-adenosyl-L-methionine = N,N-dimethylglycine + S-adenosyl-L-homocysteine + H(+). The catalysed reaction is N,N-dimethylglycine + S-adenosyl-L-methionine = glycine betaine + S-adenosyl-L-homocysteine + H(+). Its pathway is amine and polyamine biosynthesis; betaine biosynthesis via glycine pathway; betaine from glycine: step 2/3. It functions in the pathway amine and polyamine biosynthesis; betaine biosynthesis via glycine pathway; betaine from glycine: step 3/3. With respect to regulation, inhibited by n-butylic acid and S-adenosyl-L-homocysteine. In terms of biological role, catalyzes the methylation of sarcosine and dimethylglycine to dimethylglycine and betaine, respectively, with S-adenosylmethionine (AdoMet) acting as the methyl donor. Activity with sarcosine is much weaker than activity with dimethylglycine. This chain is Sarcosine/dimethylglycine N-methyltransferase, found in Aphanothece halophytica.